A 273-amino-acid chain; its full sequence is 2,3,4,5-tetrahydropyridine-2,6-dicarboxylate N-succinyltransferase (273 aa).

Positions 104 and 141 each coordinate substrate.

It belongs to the transferase hexapeptide repeat family. Homotrimer.

Its subcellular location is the cytoplasm. The catalysed reaction is (S)-2,3,4,5-tetrahydrodipicolinate + succinyl-CoA + H2O = (S)-2-succinylamino-6-oxoheptanedioate + CoA. It functions in the pathway amino-acid biosynthesis; L-lysine biosynthesis via DAP pathway; LL-2,6-diaminopimelate from (S)-tetrahydrodipicolinate (succinylase route): step 1/3. This is 2,3,4,5-tetrahydropyridine-2,6-dicarboxylate N-succinyltransferase from Thioalkalivibrio sulfidiphilus (strain HL-EbGR7).